The primary structure comprises 403 residues: MQIYLVGGAVRDQLLQLPVYDRDWVVVGSSPQAMLAAGFQAVGKDFPVFLHPNSKEEHALARTERKTGVGYTGFACHYAPDVSLEDDLLRRDLTINAMAQDNSGQLIDPYGGQRDLAAKVLRHVSPAFVEDPLRVLRVARFAAKLHHLGFTVAEETMQLMAKIVQSGELQHLTAERVWQEWHKSLSTNHPEVFLQVLRDCGALAVVLPEIDRLFGVPQPEKWHPEIDTGIHTLMVAKQAAQLSDSLPVRFAAQVHDLGKGVTPPSEWPSHKLHCHTGLNIIESLCERIRVPNEFRDLALAVCAQHSNIHRADELKPTTKLKVLGLLDVWRKPERLEQVLLCCEADHRGRLGLENEPYPQREIFLRAYQAALGVAVQAVIADGFHGKQIKEELDKRRVSAIEAL.

ATP-binding residues include Gly-8 and Arg-11. CTP contacts are provided by Gly-8 and Arg-11. 2 residues coordinate Mg(2+): Asp-21 and Asp-23. Arg-91, Arg-137, and Arg-140 together coordinate ATP. The CTP site is built by Arg-91, Arg-137, and Arg-140. The region spanning 228-329 (TGIHTLMVAK…LKVLGLLDVW (102 aa)) is the HD domain.

The protein belongs to the tRNA nucleotidyltransferase/poly(A) polymerase family. Bacterial CCA-adding enzyme type 1 subfamily. In terms of assembly, monomer. Can also form homodimers and oligomers. Mg(2+) serves as cofactor. Ni(2+) is required as a cofactor.

The catalysed reaction is a tRNA precursor + 2 CTP + ATP = a tRNA with a 3' CCA end + 3 diphosphate. The enzyme catalyses a tRNA with a 3' CCA end + 2 CTP + ATP = a tRNA with a 3' CCACCA end + 3 diphosphate. Its function is as follows. Catalyzes the addition and repair of the essential 3'-terminal CCA sequence in tRNAs without using a nucleic acid template. Adds these three nucleotides in the order of C, C, and A to the tRNA nucleotide-73, using CTP and ATP as substrates and producing inorganic pyrophosphate. tRNA 3'-terminal CCA addition is required both for tRNA processing and repair. Also involved in tRNA surveillance by mediating tandem CCA addition to generate a CCACCA at the 3' terminus of unstable tRNAs. While stable tRNAs receive only 3'-terminal CCA, unstable tRNAs are marked with CCACCA and rapidly degraded. In Vibrio cholerae serotype O1 (strain ATCC 39541 / Classical Ogawa 395 / O395), this protein is Multifunctional CCA protein.